A 264-amino-acid chain; its full sequence is Short-chain dehydrogenase/reductase ucsE (264 aa).

Residues 13-32 form a helical membrane-spanning segment; sequence LVVVVGGTSGLGFAVAQAAV. NADP(+) is bound by residues L23, S43, and D74. N-linked (GlcNAc...) asparagine glycosylation is present at N125. NADP(+)-binding residues include R130 and K139. Catalysis depends on S157, which acts as the Proton donor. V202 and T204 together coordinate NADP(+).

Belongs to the short-chain dehydrogenases/reductases (SDR) family. The cofactor is NADP(+).

It localises to the membrane. It participates in mycotoxin biosynthesis. Its function is as follows. Short-chain dehydrogenase/reductase; part of the gene cluster that mediates the biosynthesis of UCS1025A, a member of the pyrrolizidinone family that acts as a strong telomerase inhibitor and displays potent antibacterial and antitumor properties. These compounds share a hemiaminal-containing pyrrolizidinone core fused with a gamma-lactone, giving a furopyrrolizidine that is connected to a decalin fragment. The polyketide synthase module (PKS) of the PKS-NRPS ucsA is responsible for the synthesis of the polyketide backbone via the condensation of an acetyl-CoA starter unit with 6 malonyl-CoA units. The downstream nonribosomal peptide synthetase (NRPS) module then amidates the carboxyl end of the polyketide with a 2S,3S-methylproline derived from L-isoleucine by the 2-oxoglutarate-dependent dioxygenase ucsF which converts L-isoleucine to (4S,5S)-4-methylpyrroline-5-carboxylate that is further converted to 2S,3S-methylproline by the pyrroline-5-carboxylate reductase ucsG. Reductive release of the completed aminoacyl polyketide from the assembly line can form the 3-pyrrolin-2-one structure via an intramolecular Knoevenagel reaction. Because ucsA lacks a designated enoylreductase (ER) domain, the required activity is provided the enoyl reductase ucsL. This keto acyclic precursor is the substrate of the Diels-Alderase ucsH, that catalyzes the Diels-Alder cycloaddition. Oxidation of the 3S-methyl group to a carboxylate by the cytochrome P450 monooxygenase ucsK allows an oxa-Michael cyclization that might involve the reductase/dehydrogenase ucsI and which furnishes the furopyrrolizidine. The oxidase ucsJ likely plays a critical role in stereoselective reduction of the C5-C6 double bond to afford the required R-configured carboxylate group. Further enolization and oxidation at C5 by an unidentified enzyme affords the last intermediate that can undergo oxa-Michael cyclization to yield UCS1025A. In Acremonium sp, this protein is Short-chain dehydrogenase/reductase ucsE.